Reading from the N-terminus, the 70-residue chain is Protein SlyX homolog (70 aa).

Belongs to the SlyX family.

This chain is Protein SlyX homolog, found in Shewanella oneidensis (strain ATCC 700550 / JCM 31522 / CIP 106686 / LMG 19005 / NCIMB 14063 / MR-1).